The primary structure comprises 43 residues: Protein PsbN (43 aa).

The helical transmembrane segment at Thr5–Phe27 threads the bilayer.

It belongs to the PsbN family.

The protein resides in the plastid. The protein localises to the chloroplast thylakoid membrane. Its function is as follows. May play a role in photosystem I and II biogenesis. The sequence is that of Protein PsbN from Cycas taitungensis (Prince sago).